We begin with the raw amino-acid sequence, 1749 residues long: Kinesin-like protein KIF13A (1749 aa).

The 348-residue stretch at K5–I352 folds into the Kinesin motor domain. ATP is bound at residue G102–S109. The stretch at N359 to M431 forms a coiled coil. Residues H469–V519 form the FHA domain. A coiled-coil region spans residues L552–K775. Disordered regions lie at residues Q633–S652 and I834–L853. S636 carries the phosphoserine modification. The stretch at S1086–G1126 forms a coiled coil. S1274 carries the post-translational modification Phosphoserine. Residues L1370–P1383 show a composition bias toward polar residues. Disordered regions lie at residues L1370–V1402 and T1417–H1436. Over residues D1421–C1430 the composition is skewed to basic and acidic residues. Phosphoserine occurs at positions 1441, 1477, 1481, 1524, 1600, and 1650. A coiled-coil region spans residues L1475–Q1499. 2 disordered regions span residues C1584–A1665 and D1698–R1749. Basic and acidic residues predominate over residues E1719–N1741.

This sequence belongs to the TRAFAC class myosin-kinesin ATPase superfamily. Kinesin family. In terms of assembly, interacts with AP1G1 and AP1G2. Interacts with ZFYVE26. Interacts with AP2B1.

The protein localises to the golgi apparatus membrane. The protein resides in the cytoplasm. It localises to the cytoskeleton. Its subcellular location is the microtubule organizing center. It is found in the centrosome. The protein localises to the midbody. The protein resides in the endosome membrane. Functionally, plus end-directed microtubule-dependent motor protein involved in intracellular transport and regulating various processes such as mannose-6-phosphate receptor (M6PR) transport to the plasma membrane, endosomal sorting during melanosome biogenesis and cytokinesis. During melanosome maturation, required for delivering melanogenic enzymes from recycling endosomes to nascent melanosomes by creating peripheral recycling endosomal subdomains in melanocytes. Also required for the abscission step in cytokinesis: mediates translocation of ZFYVE26, and possibly TTC19, to the midbody during cytokinesis. Mediates the transport of M6PR-containing vesicles from trans-Golgi network to the plasma membrane via direct interaction with the AP-1 complex. The protein is Kinesin-like protein KIF13A (Kif13a) of Mus musculus (Mouse).